The following is a 661-amino-acid chain: Methyl-accepting chemotaxis protein McpA (661 aa).

At 1-16 (MKKILQLIKQRSITRK) the chain is on the cytoplasmic side. Residues 17–37 (LLVSFLSILIIPVVILAIFAY) traverse the membrane as a helical segment. Residues 38-281 (QSASSSLDRQ…IHEAAQPVLH (244 aa)) are Extracellular-facing. In terms of domain architecture, Cache spans 152 to 228 (ITDPYKTAST…QSGTELKGDW (77 aa)). A helical membrane pass occupies residues 282–302 (LALIVLAAAIIIGIIVMTLII). The HAMP domain maps to 303 to 355 (RSITTPLKQLVGSSKRISEGDLTETIDIRSKDELGELGKSFNNMASSLRSLIH). At 303 to 661 (RSITTPLKQL…RDMTKRFKIE (359 aa)) the chain is on the cytoplasmic side. Glu-370 is modified (glutamate methyl ester (Glu)). Positions 374-610 (SAAQTSKATE…EVSGASEHIA (237 aa)) constitute a Methyl-accepting transducer domain. Deamidated glutamine occurs at positions 593 and 594. At Gln-594 the chain carries Glutamate methyl ester (Gln). Residues Glu-629 and Glu-636 each carry the glutamate methyl ester (Glu) modification.

Belongs to the methyl-accepting chemotaxis (MCP) protein family. As to quaternary structure, interacts with FloT. Post-translationally, deamidated by CheD on Gln-593 and Gln-594, producing glutamate residues. The glutamate residues are then methylated. Other additional sites are deamidated and methylated as well.

It localises to the cell membrane. The protein resides in the membrane raft. Chemotactic-signal transducers respond to changes in the concentration of attractants and repellents in the environment, transduce a signal from the outside to the inside of the cell, and facilitate sensory adaptation through the variation of the level of methylation. All amino acids serve as attractants in B.subtilis, they appear to cause an increase in the turnover methyl groups, leading to methylation of an unidentified acceptor, while repellents have been shown to cause a decrease in methyl group turnover. The methyl groups are added by a methyltransferase and removed by a methylesterase. McpA is required for taxis towards glucose and alpha-methylglucoside. The chain is Methyl-accepting chemotaxis protein McpA (mcpA) from Bacillus subtilis (strain 168).